The primary structure comprises 780 residues: TSC22 domain family protein 2 (780 aa).

Disordered stretches follow at residues 20–86 (AQVA…TVSP), 126–158 (TSAP…PTTC), 235–499 (AHGP…PGGP), 587–607 (LVGQ…PPLS), and 736–780 (LSSN…VSSA). Over residues 28–37 (EDTESLDDPD) the composition is skewed to acidic residues. Low complexity predominate over residues 126–146 (TSAPAPGAPGGPQLAGSSAGP). Over residues 241-262 (GTDSSLTAVSQLPPSEKMSQPT) the composition is skewed to polar residues. 3 stretches are compositionally biased toward low complexity: residues 297–316 (GAAT…QPQG), 344–361 (PAVG…AYPQ), and 395–412 (QPSS…ATLP). Over residues 415–434 (TGQNASSVGAQLMGASSQPS) the composition is skewed to polar residues. Over residues 453–468 (QPTGVPPATVGGVVQP) the composition is skewed to low complexity. The span at 736 to 756 (LSSNDQLSQLPTQQANPGSTS) shows a compositional bias: polar residues. Positions 765–774 (PPQPTQPPQQ) are enriched in pro residues.

This sequence belongs to the TSC-22/Dip/Bun family. In terms of assembly, interacts with NRBP1. Interacts with PKM isoform M2; the interaction results in reduced nuclear levels of PKM isoform M2, leading to repression of cyclin CCND1 transcription and reduced cell growth. Interacts with WDR77.

Functionally, reduces the level of nuclear PKM isoform M2 which results in repression of cyclin CCND1 transcription and reduced cell growth. This is TSC22 domain family protein 2 from Homo sapiens (Human).